We begin with the raw amino-acid sequence, 88 residues long: Small ribosomal subunit protein bS16 (88 aa).

It belongs to the bacterial ribosomal protein bS16 family.

The polypeptide is Small ribosomal subunit protein bS16 (Staphylococcus saprophyticus subsp. saprophyticus (strain ATCC 15305 / DSM 20229 / NCIMB 8711 / NCTC 7292 / S-41)).